A 1475-amino-acid polypeptide reads, in one-letter code: Sex-determining transformer protein 2 (1475 aa).

An N-terminal signal peptide occupies residues 1-31; that stretch reads MKLKYNKLLVSVVIVTFVTFGLLLAECFGKS. 11 helical membrane passes run 446 to 466, 474 to 494, 496 to 516, 589 to 609, 737 to 757, 902 to 922, 928 to 948, 952 to 972, 979 to 999, 1034 to 1054, and 1060 to 1080; these read TIHF…IFVW, AFMF…VCST, GVIV…LANL, WGCT…FIDS, GVIL…LLFI, AVGV…LFAF, AGIF…TPTI, FLFS…VHLF, IYTN…FCAL, IAQF…ICSI, and IFFV…FNSI. The interval 1133–1273 is interaction with fem-3; the sequence is EFSIKRSSPP…RERNLMNKRS (141 aa). 2 disordered regions span residues 1142–1194 and 1267–1330; these read PCRY…GDNT and NLMN…VDEP. Over residues 1178 to 1188 the composition is skewed to basic residues; it reads RSPKTGNKRVR. Residues 1276–1310 are compositionally biased toward basic and acidic residues; sequence QRRESRNIEKMKKSQENLDKEKSEEKISESKKNQD. An MX regulatory domain; required for tra-1 binding region spans residues 1392-1413; sequence CEDIYWTHRTGQLPPGLQVPRR. Positions 1424–1475 are disordered; sequence TPPPEDLNWVPPAESPPIPIPQQAFDLLEERRRNHREQQDEAREGDLSDPEV. Residues 1451–1469 are compositionally biased toward basic and acidic residues; it reads LEERRRNHREQQDEAREGD.

In terms of assembly, interacts with tra-1 and fem-3. In terms of processing, undergoes cleavage by tra-3 to produce a feminizing carboxy-terminal isoform Tra-2B. As to expression, somatic and germline tissues. Isoform Tra-2B is specific to oocytes.

Its subcellular location is the membrane. Functionally, plays a major role in controlling sexual cell fates. Promotes female development in XX animals where it sequesters one or more of the FEM proteins to the membrane thereby freeing the tra-1 protein (a putative transcription factor) to enter the nucleus and promote female development. In XO animals it acts as a receptor for her-1 which prevents it from binding to FEM proteins thereby repressing the activity of tra-1. Negatively regulates male development when bound to fem-3 and is required together with tra-1 for promoting spermatogenesis. Also required for feminizing tra-3 activity. The sequence is that of Sex-determining transformer protein 2 (tra-2) from Caenorhabditis elegans.